The primary structure comprises 295 residues: Aquaporin NIP2-1 (295 aa).

2 helical membrane passes run 49–69 (VVSE…AAGI) and 83–103 (SVAG…ISGA). The NPA 1 signature appears at 106 to 108 (NPA). Transmembrane regions (helical) follow at residues 124–146 (VPFY…KAVL), 164–184 (SLVI…AVAT), and 192–212 (LAGL…GAVS). The NPA 2 signature appears at 217–219 (NPA). Residues 230–250 (LYTGLWIYFLGPVLGTLSGAW) traverse the membrane as a helical segment.

The protein belongs to the MIP/aquaporin (TC 1.A.8) family. NIP (TC 1.A.8.12) subfamily.

The protein localises to the membrane. Aquaporins facilitate the transport of water and small neutral solutes across cell membranes. This is Aquaporin NIP2-1 (NIP2-1) from Zea mays (Maize).